We begin with the raw amino-acid sequence, 294 residues long: Phosphoribosylaminoimidazole-succinocarboxamide synthase (294 aa).

This sequence belongs to the SAICAR synthetase family.

It carries out the reaction 5-amino-1-(5-phospho-D-ribosyl)imidazole-4-carboxylate + L-aspartate + ATP = (2S)-2-[5-amino-1-(5-phospho-beta-D-ribosyl)imidazole-4-carboxamido]succinate + ADP + phosphate + 2 H(+). Its pathway is purine metabolism; IMP biosynthesis via de novo pathway; 5-amino-1-(5-phospho-D-ribosyl)imidazole-4-carboxamide from 5-amino-1-(5-phospho-D-ribosyl)imidazole-4-carboxylate: step 1/2. The sequence is that of Phosphoribosylaminoimidazole-succinocarboxamide synthase from Thermoplasma acidophilum (strain ATCC 25905 / DSM 1728 / JCM 9062 / NBRC 15155 / AMRC-C165).